Here is a 300-residue protein sequence, read N- to C-terminus: 33 kDa chaperonin (300 aa).

2 disulfide bridges follow: C235-C237 and C269-C272.

This sequence belongs to the HSP33 family. Post-translationally, under oxidizing conditions two disulfide bonds are formed involving the reactive cysteines. Under reducing conditions zinc is bound to the reactive cysteines and the protein is inactive.

It localises to the cytoplasm. Functionally, redox regulated molecular chaperone. Protects both thermally unfolding and oxidatively damaged proteins from irreversible aggregation. Plays an important role in the bacterial defense system toward oxidative stress. In Pseudomonas fluorescens (strain ATCC BAA-477 / NRRL B-23932 / Pf-5), this protein is 33 kDa chaperonin.